We begin with the raw amino-acid sequence, 180 residues long: 2-oxoglutarate dehydrogenase, mitochondrial (180 aa).

Position 14 is an N6-succinyllysine (lysine 14). Serine 40 bears the Phosphoserine mark. Arginine 64 is a thiamine diphosphate binding site.

The protein belongs to the alpha-ketoglutarate dehydrogenase family. In terms of assembly, homodimer. The 2-oxoglutarate dehydrogenase complex is composed of OGDH (2-oxoglutarate dehydrogenase; E1), DLST (dihydrolipoamide succinyltransferase; E2) and DLD (dihydrolipoamide dehydrogenase; E3). It contains multiple copies of the three enzymatic components (E1, E2 and E3). In the nucleus, the 2-oxoglutarate dehydrogenase complex associates with KAT2A. Interacts with ABHD11; this interaction maintains the functional lipoylation of the 2-oxoglutarate dehydrogenase complex. The cofactor is thiamine diphosphate. Mg(2+) serves as cofactor.

It localises to the mitochondrion matrix. It is found in the nucleus. The catalysed reaction is N(6)-[(R)-lipoyl]-L-lysyl-[protein] + 2-oxoglutarate + H(+) = N(6)-[(R)-S(8)-succinyldihydrolipoyl]-L-lysyl-[protein] + CO2. Calcium ions and ADP stimulate, whereas ATP and NADH reduce catalytic activity. Functionally, 2-oxoglutarate dehydrogenase (E1) component of the 2-oxoglutarate dehydrogenase complex (OGDHC), which mediates the decarboxylation of alpha-ketoglutarate. The 2-oxoglutarate dehydrogenase complex catalyzes the overall conversion of 2-oxoglutarate to succinyl-CoA and CO(2). The 2-oxoglutarate dehydrogenase complex is mainly active in the mitochondrion. A fraction of the 2-oxoglutarate dehydrogenase complex also localizes in the nucleus and is required for lysine succinylation of histones: associates with KAT2A on chromatin and provides succinyl-CoA to histone succinyltransferase KAT2A. The polypeptide is 2-oxoglutarate dehydrogenase, mitochondrial (Mesocricetus auratus (Golden hamster)).